Reading from the N-terminus, the 253-residue chain is 5-oxoprolinase subunit A (253 aa).

It belongs to the LamB/PxpA family. As to quaternary structure, forms a complex composed of PxpA, PxpB and PxpC.

It catalyses the reaction 5-oxo-L-proline + ATP + 2 H2O = L-glutamate + ADP + phosphate + H(+). Catalyzes the cleavage of 5-oxoproline to form L-glutamate coupled to the hydrolysis of ATP to ADP and inorganic phosphate. In Bacillus cereus (strain AH820), this protein is 5-oxoprolinase subunit A.